Reading from the N-terminus, the 201-residue chain is Transgelin (201 aa).

Ala-2 carries the N-acetylalanine modification. The region spanning 24–137 is the Calponin-homology (CH) domain; sequence EELEERLVEW…RTVMALGSLA (114 aa). The segment at 154-161 is could be involved in actin-binding; that stretch reads KKAQEHKR. Ser-166 carries the phosphoserine modification. Lys-172 carries the post-translational modification N6-acetyllysine. The stretch at 175–200 is one Calponin-like repeat; the sequence is IGLQMGSNRGASQAGMTGYGRPRQII. A Phosphoserine modification is found at Ser-181. Arg-183 is modified (omega-N-methylarginine).

Belongs to the calponin family. As to expression, smooth muscle and mesenchymal cells but not in skeletal muscle or lymphocytes.

The protein resides in the cytoplasm. In terms of biological role, actin cross-linking/gelling protein. The sequence is that of Transgelin (Tagln) from Rattus norvegicus (Rat).